Consider the following 61-residue polypeptide: MPKIIEAVYENGVFKPLQKVDLKEGERVKIKLELKVEPIDLGEPVSVEEIKKIRDGTWMSS.

It belongs to the UPF0165 family.

Its function is as follows. Possibly the antitoxin component of a type II toxin-antitoxin (TA) system. Its cognate toxin is VapC21 (Potential). The chain is Putative antitoxin VapB21 (vapB21) from Archaeoglobus fulgidus (strain ATCC 49558 / DSM 4304 / JCM 9628 / NBRC 100126 / VC-16).